The chain runs to 193 residues: Cytidylate kinase (193 aa).

12–20 (GLAGSGTTT) contacts ATP.

Belongs to the cytidylate kinase family. Type 2 subfamily.

It is found in the cytoplasm. The enzyme catalyses CMP + ATP = CDP + ADP. It carries out the reaction dCMP + ATP = dCDP + ADP. The chain is Cytidylate kinase from Thermococcus sibiricus (strain DSM 12597 / MM 739).